Reading from the N-terminus, the 124-residue chain is Protein MGF 110-4L-B (124 aa).

An N-terminal signal peptide occupies residues 1 to 18; it reads MLVIFLGILGLLANQVLG. N-linked (GlcNAc...) asparagine; by host glycosylation occurs at Asn64. Positions 121 to 124 match the Prevents secretion from ER motif; the sequence is KEDL.

It belongs to the asfivirus MGF 110 family.

It localises to the virion. Its subcellular location is the host endoplasmic reticulum-Golgi intermediate compartment. Functionally, causes the redistribution of lumenal ER protein to an enlarged ERGIC compartment. The sequence is that of Protein MGF 110-4L-B from African swine fever virus (isolate Portugal/Lis 57/1957) (ASFV).